The chain runs to 586 residues: Exocyst complex component EXO70A3 (586 aa).

Residues N65 and N106 are each glycosylated (N-linked (GlcNAc...) asparagine). The interval 119–149 is disordered; that stretch reads CLPSNLRPPSDDEGSDGKSHDPQSNGLGKTD. The helical transmembrane segment at 258–278 threads the bilayer; it reads FAEITTISFGMLLSFGYAIAI. N-linked (GlcNAc...) asparagine glycosylation is found at N321 and N487.

It belongs to the EXO70 family. In terms of assembly, subunit of the exocyst complex. Confined to the outer layer of the columella cells in the root tips of young seedlings.

It localises to the membrane. Component of the exocyst complex involved in the docking of exocytic vesicles with fusion sites on the plasma membrane during regulated or polarized secretion. Involved in PIN4 exocytosis and gravitropic responses in columella cells. By monitoring PIN4 distribution in columella cells, modulates auxin repartition and subsequently regulates the root system architecture (RSA), thus being a component of the auxin-dependent root directional growth (ARD). This is Exocyst complex component EXO70A3 from Arabidopsis thaliana (Mouse-ear cress).